The sequence spans 320 residues: rRNA 2'-O-methyltransferase fibrillarin 2 (320 aa).

Positions 1–79 (MRPPLTGSGG…GRGGMKGGSK (79 aa)) are disordered. 2 stretches are compositionally biased toward gly residues: residues 7–44 (GSGG…GGRG) and 57–76 (PPRG…GMKG). Residues 167–168 (TT), 186–187 (EF), 211–212 (DA), and 231–234 (DVAQ) each bind S-adenosyl-L-methionine.

It belongs to the methyltransferase superfamily. Fibrillarin family. As to quaternary structure, component of box C/D small nucleolar ribonucleoprotein (snoRNP) particles. Interacts with groundnut rosette virus long-distance movement protein; this interaction is required for virus long-distance movement protein transiting through host Cajal body and nucleolus, relocalization of fibrillarin to the cytoplasm, and in presence of viral RNA, leads to the formation of stable RNPs. Interacts (via GAR domain) with the hordeivirus TGB1 movement protein (via the first 82 amino acid residues). Interacts with PRMT11 and PRMT12. Interacts with MED19A. In terms of processing, methylated by PRMT11 and PRMT12. Expressed in roots and flowers. Expressed in leaves and stems. Expression levels decrease during aging.

The protein resides in the nucleus. It is found in the nucleolus. The catalysed reaction is a ribonucleotide in rRNA + S-adenosyl-L-methionine = a 2'-O-methylribonucleotide in rRNA + S-adenosyl-L-homocysteine + H(+). It catalyses the reaction L-glutaminyl-[histone H2A] + S-adenosyl-L-methionine = N(5)-methyl-L-glutaminyl-[histone H2A] + S-adenosyl-L-homocysteine + H(+). In terms of biological role, S-adenosyl-L-methionine-dependent methyltransferase that has the ability to methylate both RNAs and proteins. Involved in pre-rRNA processing. Utilizes the methyl donor S-adenosyl-L-methionine to catalyze the site-specific 2'-hydroxyl methylation of ribose moieties in pre-ribosomal RNA. Site specificity is provided by a guide RNA that base pairs with the substrate. Methylation occurs at a characteristic distance from the sequence involved in base pairing with the guide RNA. Also acts as a protein methyltransferase by mediating methylation of 'Gln-105' of histone H2A (H2AQ105me), a modification that impairs binding of the FACT complex and is specifically present at 35S ribosomal DNA locus. Acts as a negative regulator of expression of immune responsive genes, including pathogenesis-related gene 1 (PR1), and of resistance against bacterial pathogen. Binds to MED19A, a positive regulator of PR1 expression, to repress the activator activity of MED19A. In response to the bacterial pathogen-associated molecular pattern (PAMP) elf18, associates with the long non-coding RNA (lncRNA) ELENA1 (At4g16355), and releases its repression of MED19A. Possesses ribonuclease activity toward rRNA in vitro. Binds phosphoinositides, phospholipids and phosphatidic acid in vitro. The chain is rRNA 2'-O-methyltransferase fibrillarin 2 from Arabidopsis thaliana (Mouse-ear cress).